The chain runs to 209 residues: Thymidylate kinase (209 aa).

Residue 13–20 (GLEGAGKS) coordinates ATP.

This sequence belongs to the thymidylate kinase family.

It catalyses the reaction dTMP + ATP = dTDP + ADP. Phosphorylation of dTMP to form dTDP in both de novo and salvage pathways of dTTP synthesis. This is Thymidylate kinase from Shewanella sp. (strain MR-4).